Consider the following 388-residue polypeptide: Succinate--CoA ligase [ADP-forming] subunit beta (388 aa).

Residues lysine 9–glutamate 244 enclose the ATP-grasp domain. ATP is bound by residues lysine 46, glycine 53–glycine 55, glutamate 99, cysteine 102, and glutamate 107. Residues asparagine 199 and aspartate 213 each coordinate Mg(2+). Residues asparagine 264 and glycine 321 to methionine 323 contribute to the substrate site.

The protein belongs to the succinate/malate CoA ligase beta subunit family. As to quaternary structure, heterotetramer of two alpha and two beta subunits. Requires Mg(2+) as cofactor.

It catalyses the reaction succinate + ATP + CoA = succinyl-CoA + ADP + phosphate. It carries out the reaction GTP + succinate + CoA = succinyl-CoA + GDP + phosphate. The protein operates within carbohydrate metabolism; tricarboxylic acid cycle; succinate from succinyl-CoA (ligase route): step 1/1. In terms of biological role, succinyl-CoA synthetase functions in the citric acid cycle (TCA), coupling the hydrolysis of succinyl-CoA to the synthesis of either ATP or GTP and thus represents the only step of substrate-level phosphorylation in the TCA. The beta subunit provides nucleotide specificity of the enzyme and binds the substrate succinate, while the binding sites for coenzyme A and phosphate are found in the alpha subunit. This is Succinate--CoA ligase [ADP-forming] subunit beta from Staphylococcus saprophyticus subsp. saprophyticus (strain ATCC 15305 / DSM 20229 / NCIMB 8711 / NCTC 7292 / S-41).